The following is a 393-amino-acid chain: CCA-adding enzyme (393 aa).

ATP contacts are provided by G27 and R30. The CTP site is built by G27 and R30. The Mg(2+) site is built by D40 and D42. R111, D154, R157, R160, and R163 together coordinate ATP. CTP-binding residues include R111, D154, R157, R160, and R163.

Belongs to the tRNA nucleotidyltransferase/poly(A) polymerase family. Bacterial CCA-adding enzyme type 3 subfamily. As to quaternary structure, homodimer. It depends on Mg(2+) as a cofactor.

The catalysed reaction is a tRNA precursor + 2 CTP + ATP = a tRNA with a 3' CCA end + 3 diphosphate. It catalyses the reaction a tRNA with a 3' CCA end + 2 CTP + ATP = a tRNA with a 3' CCACCA end + 3 diphosphate. Functionally, catalyzes the addition and repair of the essential 3'-terminal CCA sequence in tRNAs without using a nucleic acid template. Adds these three nucleotides in the order of C, C, and A to the tRNA nucleotide-73, using CTP and ATP as substrates and producing inorganic pyrophosphate. tRNA 3'-terminal CCA addition is required both for tRNA processing and repair. Also involved in tRNA surveillance by mediating tandem CCA addition to generate a CCACCA at the 3' terminus of unstable tRNAs. While stable tRNAs receive only 3'-terminal CCA, unstable tRNAs are marked with CCACCA and rapidly degraded. This chain is CCA-adding enzyme, found in Listeria monocytogenes serotype 4a (strain HCC23).